An 88-amino-acid polypeptide reads, in one-letter code: Small ribosomal subunit protein uS17 (88 aa).

It belongs to the universal ribosomal protein uS17 family. As to quaternary structure, part of the 30S ribosomal subunit.

Its function is as follows. One of the primary rRNA binding proteins, it binds specifically to the 5'-end of 16S ribosomal RNA. This Prochlorococcus marinus subsp. pastoris (strain CCMP1986 / NIES-2087 / MED4) protein is Small ribosomal subunit protein uS17.